Reading from the N-terminus, the 109-residue chain is Large ribosomal subunit protein uL24 (109 aa).

Belongs to the universal ribosomal protein uL24 family. In terms of assembly, part of the 50S ribosomal subunit.

Its function is as follows. One of two assembly initiator proteins, it binds directly to the 5'-end of the 23S rRNA, where it nucleates assembly of the 50S subunit. In terms of biological role, one of the proteins that surrounds the polypeptide exit tunnel on the outside of the subunit. The sequence is that of Large ribosomal subunit protein uL24 from Rickettsia bellii (strain RML369-C).